Reading from the N-terminus, the 299-residue chain is Oxygen-dependent coproporphyrinogen-III oxidase (299 aa).

S92 lines the substrate pocket. Residues H96 and H106 each contribute to the a divalent metal cation site. Catalysis depends on H106, which acts as the Proton donor. Residue 108–110 participates in substrate binding; it reads NVR. H145 and H175 together coordinate a divalent metal cation. Residues 240–275 are important for dimerization; it reads YVEFNLVWDRGTLFGLQTGGRTESILMSMPPLVRWE. Substrate is bound at residue 258–260; that stretch reads GGR.

The protein belongs to the aerobic coproporphyrinogen-III oxidase family. Homodimer. A divalent metal cation is required as a cofactor.

It is found in the cytoplasm. It catalyses the reaction coproporphyrinogen III + O2 + 2 H(+) = protoporphyrinogen IX + 2 CO2 + 2 H2O. It functions in the pathway porphyrin-containing compound metabolism; protoporphyrin-IX biosynthesis; protoporphyrinogen-IX from coproporphyrinogen-III (O2 route): step 1/1. Involved in the heme biosynthesis. Catalyzes the aerobic oxidative decarboxylation of propionate groups of rings A and B of coproporphyrinogen-III to yield the vinyl groups in protoporphyrinogen-IX. The sequence is that of Oxygen-dependent coproporphyrinogen-III oxidase from Salmonella schwarzengrund (strain CVM19633).